Reading from the N-terminus, the 438-residue chain is Trigger factor (438 aa).

The PPIase FKBP-type domain maps to 163 to 248 (GDKLNIDFEG…VKRIETTEAR (86 aa)).

Belongs to the FKBP-type PPIase family. Tig subfamily.

The protein resides in the cytoplasm. It carries out the reaction [protein]-peptidylproline (omega=180) = [protein]-peptidylproline (omega=0). Functionally, involved in protein export. Acts as a chaperone by maintaining the newly synthesized protein in an open conformation. Functions as a peptidyl-prolyl cis-trans isomerase. This chain is Trigger factor, found in Syntrophomonas wolfei subsp. wolfei (strain DSM 2245B / Goettingen).